The following is a 549-amino-acid chain: Probable amidase (549 aa).

Active-site charge relay system residues include Lys132 and Ser209. Residue Ser233 is the Acyl-ester intermediate of the active site.

The protein belongs to the amidase family.

The enzyme catalyses a monocarboxylic acid amide + H2O = a monocarboxylate + NH4(+). This Saccharomyces cerevisiae (strain ATCC 204508 / S288c) (Baker's yeast) protein is Probable amidase (AMD2).